Here is a 770-residue protein sequence, read N- to C-terminus: Protein PAT1 homolog 1 (770 aa).

The interval Met1 to Val42 is disordered. The region A; interaction with DDX6/RCK stretch occupies residues Met1 to Glu84. The segment at Met1–Arg397 is involved in nuclear foci localization. Residues Leu7 to Asn33 show a composition bias toward acidic residues. Residues Asn85 to His388 form a region N; interaction with decapping machinery region. The Nuclear export signal motif lies at Leu86–Ile95. A Phosphoserine modification is found at Ser177. Thr178 is modified (phosphothreonine). Residues Ser179 and Ser184 each carry the phosphoserine modification. Phosphothreonine is present on Thr194. An asymmetric dimethylarginine mark is found at Arg217, Arg223, and Arg263. Residues Arg223–Arg397 form an involved in RNA-binding region. A Phosphoserine modification is found at Ser278. At Arg284 the chain carries Asymmetric dimethylarginine. Disordered regions lie at residues Ser320–Gln341 and Gln369–Asp394. Pro residues predominate over residues Ala321–Gly337. Residues Gln369 to Asn380 show a composition bias toward low complexity. Arg385 bears the Omega-N-methylarginine mark. The span at Arg385–Asp394 shows a compositional bias: basic and acidic residues. Residues Arg389–Glu448 form a region H region. The interval Lys398–Arg770 is involved in nuclear speckle localization. The interval Met449–Arg770 is region C.

This sequence belongs to the PAT1 family. In terms of assembly, interacts (via region A) with DDX6/RCK. Interacts (via region H and region C) with LSM1 and LSM4. Interacts (via region N) with DCP1A, DCP2, EDC3, EDC4 and XRN1. Interacts with the CCR4-NOT complex. Interacts with the Lsm-containing SMN-Sm protein complex. Interacts with EIF4ENIF1/4E-T.

The protein localises to the cytoplasm. Its subcellular location is the P-body. The protein resides in the nucleus. It localises to the PML body. It is found in the nucleus speckle. Its function is as follows. RNA-binding protein involved in deadenylation-dependent decapping of mRNAs, leading to the degradation of mRNAs. Acts as a scaffold protein that connects deadenylation and decapping machinery. Required for cytoplasmic mRNA processing body (P-body) assembly. The chain is Protein PAT1 homolog 1 (Patl1) from Rattus norvegicus (Rat).